The sequence spans 395 residues: S-adenosylmethionine synthase 5 (395 aa).

Glu-10 contacts Mg(2+). His-16 contributes to the ATP binding site. Glu-44 provides a ligand contact to K(+). Residues Glu-57 and Gln-100 each coordinate L-methionine. ATP-binding positions include 168–170, 236–239, Asp-247, 253–254, Ala-270, Lys-274, and Lys-278; these read DGK, SGRF, and RK. Asp-247 is a binding site for L-methionine. Lys-278 contacts L-methionine.

It belongs to the AdoMet synthase family. In terms of assembly, homotetramer. Mn(2+) is required as a cofactor. Mg(2+) serves as cofactor. It depends on Co(2+) as a cofactor. The cofactor is K(+).

It is found in the cytoplasm. It carries out the reaction L-methionine + ATP + H2O = S-adenosyl-L-methionine + phosphate + diphosphate. It functions in the pathway amino-acid biosynthesis; S-adenosyl-L-methionine biosynthesis; S-adenosyl-L-methionine from L-methionine: step 1/1. Catalyzes the formation of S-adenosylmethionine from methionine and ATP. The reaction comprises two steps that are both catalyzed by the same enzyme: formation of S-adenosylmethionine (AdoMet) and triphosphate, and subsequent hydrolysis of the triphosphate. The polypeptide is S-adenosylmethionine synthase 5 (METK5) (Populus trichocarpa (Western balsam poplar)).